A 456-amino-acid chain; its full sequence is MLNNAMSVVILAAGKGTRMYSDLPKVLHTLAGKAMVQHVIDAANELGAAHVHLVYGHGGDLLKQALKDDNLNWVLQAEQLGTGHAMQQAAPFFADDEDILMLYGDVPLISVETLQRLRDAKPQGGIGLLTVKLDDPTGYGRITRENGKVTGIVEHKDATDEQRQIQEINTGILIANGADMKRWLAKLTNNNAQGEYYITDIIALAYQEGREIVAVHPQRLSEVEGVNNRLQLSRLERVYQSEQAEKLLLAGVMLRDPARFDLRGTLTHGRDVEIDTNVIIEGNVTLGNRVKIGTGCVIKNSVIGDDCEISPYTVVEDANLAAACTIGPFARLRPGAELLEGAHVGNFVEMKKARLGKGSKAGHLTYLGDAEIGDNVNIGAGTITCNYDGANKFKTIIGDDVFVGSDTQLVAPVTVGKGATIAAGTTVTRNVGENALAISRVPQTQKEGWRRPVKKK.

Positions 1-229 are pyrophosphorylase; the sequence is MLNNAMSVVI…LSEVEGVNNR (229 aa). Residues 11–14, Lys-25, Gln-76, 81–82, 103–105, Gly-140, Glu-154, Asn-169, and Asn-227 each bind UDP-N-acetyl-alpha-D-glucosamine; these read LAAG, GT, and YGD. Position 105 (Asp-105) interacts with Mg(2+). Residue Asn-227 participates in Mg(2+) binding. The linker stretch occupies residues 230–250; it reads LQLSRLERVYQSEQAEKLLLA. The segment at 251–456 is N-acetyltransferase; that stretch reads GVMLRDPARF…EGWRRPVKKK (206 aa). UDP-N-acetyl-alpha-D-glucosamine-binding residues include Arg-333 and Lys-351. The active-site Proton acceptor is the His-363. UDP-N-acetyl-alpha-D-glucosamine-binding residues include Tyr-366 and Asn-377. Residues Ala-380, 386-387, Ser-405, Ala-423, and Arg-440 each bind acetyl-CoA; that span reads NY.

This sequence in the N-terminal section; belongs to the N-acetylglucosamine-1-phosphate uridyltransferase family. In the C-terminal section; belongs to the transferase hexapeptide repeat family. As to quaternary structure, homotrimer. Mg(2+) serves as cofactor.

The protein resides in the cytoplasm. The catalysed reaction is alpha-D-glucosamine 1-phosphate + acetyl-CoA = N-acetyl-alpha-D-glucosamine 1-phosphate + CoA + H(+). The enzyme catalyses N-acetyl-alpha-D-glucosamine 1-phosphate + UTP + H(+) = UDP-N-acetyl-alpha-D-glucosamine + diphosphate. The protein operates within nucleotide-sugar biosynthesis; UDP-N-acetyl-alpha-D-glucosamine biosynthesis; N-acetyl-alpha-D-glucosamine 1-phosphate from alpha-D-glucosamine 6-phosphate (route II): step 2/2. Its pathway is nucleotide-sugar biosynthesis; UDP-N-acetyl-alpha-D-glucosamine biosynthesis; UDP-N-acetyl-alpha-D-glucosamine from N-acetyl-alpha-D-glucosamine 1-phosphate: step 1/1. It participates in bacterial outer membrane biogenesis; LPS lipid A biosynthesis. In terms of biological role, catalyzes the last two sequential reactions in the de novo biosynthetic pathway for UDP-N-acetylglucosamine (UDP-GlcNAc). The C-terminal domain catalyzes the transfer of acetyl group from acetyl coenzyme A to glucosamine-1-phosphate (GlcN-1-P) to produce N-acetylglucosamine-1-phosphate (GlcNAc-1-P), which is converted into UDP-GlcNAc by the transfer of uridine 5-monophosphate (from uridine 5-triphosphate), a reaction catalyzed by the N-terminal domain. This Escherichia coli O81 (strain ED1a) protein is Bifunctional protein GlmU.